The sequence spans 158 residues: Pycsar effector protein SaPycTM (158 aa).

3 consecutive transmembrane segments (helical) span residues 20–40, 53–73, and 136–156; these read FADAKALAIISINGFILNFNF, IFNFTAFILLIITIILAAFAV, and VFIISALGYSCLLFSSIFQII.

The protein localises to the cell membrane. Pycsar (pyrimidine cyclase system for antiphage resistance) provides immunity against bacteriophage. The pyrimidine cyclase (PycC) synthesizes cyclic nucleotides in response to infection; these serve as specific second messenger signals. The signals activate the adjacent effector, leading to bacterial cell death and abortive phage infection. A clade E Pycsar system. In terms of biological role, the effector gene of a two-gene Pycsar system. Expression of this and adjacent SaPycC cytidylate cyclase (AC P0DV38) probably confers resistance to bacteriophage. The genes are probably only expressed in response to bacteriophage infection. Probably only responds to cCMP (produced by its cognate NTP cyclase), acts by impairing membrane integrity. This chain is Pycsar effector protein SaPycTM, found in Staphylococcus aureus.